A 92-amino-acid polypeptide reads, in one-letter code: Large ribosomal subunit protein bL28 (92 aa).

A disordered region spans residues 1-34 (MGRECEITGKKTMFGNNVPRKGLSRKKGGGGQHI).

It belongs to the bacterial ribosomal protein bL28 family.

The polypeptide is Large ribosomal subunit protein bL28 (Borrelia turicatae (strain 91E135)).